The sequence spans 60 residues: Toxin S4C8 (60 aa).

4 disulfides stabilise this stretch: Cys3–Cys22, Cys17–Cys39, Cys41–Cys52, and Cys53–Cys58. The tract at residues 41 to 48 (CPTAMWPY) is important for binding to L-type calcium channels.

It belongs to the three-finger toxin family. Short-chain subfamily. L-type calcium blocker sub-subfamily. As to expression, expressed by the venom gland.

It is found in the secreted. In terms of biological role, this specific blocker of the L-type calcium channel (Cav1/CACNA1) is a smooth muscle relaxant and an inhibitor of cardiac contractions. This is Toxin S4C8 from Dendroaspis jamesoni kaimosae (Eastern Jameson's mamba).